Consider the following 168-residue polypeptide: Photosystem I assembly protein Ycf3 (168 aa).

3 TPR repeats span residues 35–68, 72–105, and 120–153; these read AFTYYRDGMSAQSEGNYAEALQNYYEAMRLEIDP, SYILYNIGLIHTSNGEHTKALEYYFRALERNPFL, and GEQAIRQGDSEIAEAWFDQAAEYWKQAIALTPGN.

It belongs to the Ycf3 family.

The protein localises to the plastid. It is found in the chloroplast thylakoid membrane. Essential for the assembly of the photosystem I (PSI) complex. May act as a chaperone-like factor to guide the assembly of the PSI subunits. In Helianthus annuus (Common sunflower), this protein is Photosystem I assembly protein Ycf3.